A 436-amino-acid chain; its full sequence is ATP-sensitive inward rectifier potassium channel 14 (436 aa).

Residues 1-83 lie on the Cytoplasmic side of the membrane; the sequence is MGLARALRRL…LSDLFTTCVD (83 aa). Positions 14–43 are disordered; the sequence is LDSGDSRAGDEEEAGPGLCRNGWAPAPVQS. Cys-81 bears the S-nitrosocysteine mark. A helical membrane pass occupies residues 84-110; sequence VRWRWMCLLFSCSFLASWLLFGLAFWL. The Extracellular segment spans residues 111-133; sequence IASLHGDLAAPPPPAPCFSHVAS. Residues 134–150 constitute an intramembrane region (helical; Pore-forming); sequence FLAAFLFALETQTSIGY. Positions 147–152 match the Selectivity filter motif; it reads SIGYGV. Topologically, residues 151–159 are extracellular; the sequence is GVRSVTEEC. Residues 160–187 traverse the membrane as a helical segment; that stretch reads PAAVAAVVLQCIAGCVLDAFVVGAVMAK. Topologically, residues 188 to 436 are cytoplasmic; that stretch reads MAKPKKRNET…TPTLALTLPP (249 aa). The span at 400 to 418 shows a compositional bias: acidic residues; that stretch reads QEEDEDDETEEGNGVETED. Residues 400–436 are disordered; that stretch reads QEEDEDDETEEGNGVETEDGAASPRVLTPTLALTLPP. A compositionally biased stretch (low complexity) spans 426–436; it reads LTPTLALTLPP.

It belongs to the inward rectifier-type potassium channel (TC 1.A.2.1) family. KCNJ14 subfamily. In terms of tissue distribution, expressed preferentially in retina.

The protein resides in the membrane. The catalysed reaction is K(+)(in) = K(+)(out). Its activity is regulated as follows. Channel activity is regulated by variations of cytosolic pH; channels are activated by alkaline and inhibited by acidic pH values. Inhibited by Ba(2+) and Cs(+) in a voltage-dependent manner; sensitivity to those inhibitors is lower than in other Kir channels. In terms of biological role, inward rectifier potassium channels are characterized by a greater tendency to allow potassium to flow into the cell rather than out of it. Their voltage dependence is regulated by the concentration of extracellular potassium; as external potassium is raised, the voltage range of the channel opening shifts to more positive voltages. This Homo sapiens (Human) protein is ATP-sensitive inward rectifier potassium channel 14 (KCNJ14).